A 287-amino-acid polypeptide reads, in one-letter code: Nucleotide-binding protein mma_3120 (287 aa).

8–15 (GISGSGKS) is an ATP binding site. A GTP-binding site is contributed by 57 to 60 (DARS).

Belongs to the RapZ-like family.

Displays ATPase and GTPase activities. This Janthinobacterium sp. (strain Marseille) (Minibacterium massiliensis) protein is Nucleotide-binding protein mma_3120.